Reading from the N-terminus, the 197-residue chain is Imidazoleglycerol-phosphate dehydratase (197 aa).

It belongs to the imidazoleglycerol-phosphate dehydratase family.

It localises to the cytoplasm. It catalyses the reaction D-erythro-1-(imidazol-4-yl)glycerol 3-phosphate = 3-(imidazol-4-yl)-2-oxopropyl phosphate + H2O. It functions in the pathway amino-acid biosynthesis; L-histidine biosynthesis; L-histidine from 5-phospho-alpha-D-ribose 1-diphosphate: step 6/9. This is Imidazoleglycerol-phosphate dehydratase from Saccharophagus degradans (strain 2-40 / ATCC 43961 / DSM 17024).